We begin with the raw amino-acid sequence, 431 residues long: Lipoyl synthase 2, mitochondrial (431 aa).

The tract at residues 21 to 43 (SPLGKLQEERGEGVAKDPKKDKQ) is disordered. The segment covering 26–40 (LQEERGEGVAKDPKK) has biased composition (basic and acidic residues). [4Fe-4S] cluster contacts are provided by C127, C132, C138, C159, C163, C166, and S375. The Radical SAM core domain occupies 142 to 364 (DEEEGTATAT…EEEAMAMGFL (223 aa)).

The protein belongs to the radical SAM superfamily. Lipoyl synthase family. [4Fe-4S] cluster is required as a cofactor.

Its subcellular location is the mitochondrion. The catalysed reaction is [[Fe-S] cluster scaffold protein carrying a second [4Fe-4S](2+) cluster] + N(6)-octanoyl-L-lysyl-[protein] + 2 oxidized [2Fe-2S]-[ferredoxin] + 2 S-adenosyl-L-methionine + 4 H(+) = [[Fe-S] cluster scaffold protein] + N(6)-[(R)-dihydrolipoyl]-L-lysyl-[protein] + 4 Fe(3+) + 2 hydrogen sulfide + 2 5'-deoxyadenosine + 2 L-methionine + 2 reduced [2Fe-2S]-[ferredoxin]. It participates in protein modification; protein lipoylation via endogenous pathway; protein N(6)-(lipoyl)lysine from octanoyl-[acyl-carrier-protein]: step 2/2. Functionally, catalyzes the radical-mediated insertion of two sulfur atoms into the C-6 and C-8 positions of the octanoyl moiety bound to the lipoyl domains of lipoate-dependent enzymes, thereby converting the octanoylated domains into lipoylated derivatives. This Trypanosoma cruzi (strain CL Brener) protein is Lipoyl synthase 2, mitochondrial.